A 199-amino-acid polypeptide reads, in one-letter code: Calcium-binding protein CAST (199 aa).

Positions 1–13 are enriched in basic and acidic residues; the sequence is MGSVQDENKDEFK. Positions 1–31 are disordered; that stretch reads MGSVQDENKDEFKQSLTRGKLKPSSSSSFRL. EF-hand domains are found at residues 36–71, 75–110, 125–160, and 163–198; these read LNSI…LGLD, SEIE…VFFG, QDES…LGLP, and SEID…VIVP. Ca(2+) is bound by residues aspartate 49, asparagine 51, aspartate 53, and glutamate 60. Positions 138, 140, 142, 149, 178, 180, 182, and 187 each coordinate Ca(2+).

Not known. Probably binds 3 calcium ions. In Solanum tuberosum (Potato), this protein is Calcium-binding protein CAST.